The chain runs to 392 residues: HORMA domain-containing protein 1 (392 aa).

Residues Q25–V227 form the HORMA domain. 2 disordered regions span residues I271–L292 and L371–T392. At S374 the chain carries Phosphoserine. Positions K381–R384 match the Nuclear localization signal motif.

As to quaternary structure, interacts with HORMAD2. Interacts with IHO1. Post-translationally, phosphorylated at Ser-375 in a SPO11-dependent manner.

It localises to the nucleus. The protein resides in the chromosome. Functionally, plays a key role in meiotic progression. Regulates 3 different functions during meiosis: ensures that sufficient numbers of processed DNA double-strand breaks (DSBs) are available for successful homology search by increasing the steady-state numbers of single-stranded DSB ends. Promotes synaptonemal-complex formation independently of its role in homology search. Plays a key role in the male mid-pachytene checkpoint and the female meiotic prophase checkpoint: required for efficient build-up of ATR activity on unsynapsed chromosome regions, a process believed to form the basis of meiotic silencing of unsynapsed chromatin (MSUC) and meiotic prophase quality control in both sexes. This chain is HORMA domain-containing protein 1 (Hormad1), found in Rattus norvegicus (Rat).